The following is a 238-amino-acid chain: Probable transcriptional regulatory protein CAB166 (238 aa).

This sequence belongs to the TACO1 family.

Its subcellular location is the cytoplasm. This is Probable transcriptional regulatory protein CAB166 from Chlamydia abortus (strain DSM 27085 / S26/3) (Chlamydophila abortus).